A 467-amino-acid polypeptide reads, in one-letter code: RuvB-like helicase 2 (467 aa).

73–80 (GPPSTGKT) contributes to the ATP binding site.

It belongs to the RuvB family. As to quaternary structure, may form heterododecamers with RVB1. Component of the SWR1 chromatin remodeling complex, the INO80 chromatin remodeling complex, and of the R2TP complex.

It localises to the nucleus. It catalyses the reaction ATP + H2O = ADP + phosphate + H(+). DNA helicase which participates in several chromatin remodeling complexes, including the SWR1 and the INO80 complexes. The SWR1 complex mediates the ATP-dependent exchange of histone H2A for the H2A variant HZT1 leading to transcriptional regulation of selected genes by chromatin remodeling. The INO80 complex remodels chromatin by shifting nucleosomes and is involved in DNA repair. Also involved in pre-rRNA processing. This is RuvB-like helicase 2 (RVB2) from Kluyveromyces lactis (strain ATCC 8585 / CBS 2359 / DSM 70799 / NBRC 1267 / NRRL Y-1140 / WM37) (Yeast).